A 324-amino-acid chain; its full sequence is Homoserine kinase (324 aa).

87–97 contacts ATP; it reads PVARGMGSSAA.

The protein belongs to the GHMP kinase family. Homoserine kinase subfamily.

The protein localises to the cytoplasm. The catalysed reaction is L-homoserine + ATP = O-phospho-L-homoserine + ADP + H(+). It functions in the pathway amino-acid biosynthesis; L-threonine biosynthesis; L-threonine from L-aspartate: step 4/5. In terms of biological role, catalyzes the ATP-dependent phosphorylation of L-homoserine to L-homoserine phosphate. In Symbiobacterium thermophilum (strain DSM 24528 / JCM 14929 / IAM 14863 / T), this protein is Homoserine kinase.